The sequence spans 415 residues: MIFDKEDFESFDPELWAAIHAEEIRQQQNIELIASENIVSKAVMAAQGSVLTNKYAEGYPGKRYYGGTEAVDVVENLAIDRAKELFGAKFANVQPHSGSQANAAAYMALIQPGDTVLGMDLNAGGHLTHGASVNFSGKTYHFVPYGVNPQTELLDYEEILKIAKEVQPKLIVAGASAYSRLIDFAKFRQIADSVGAKLMVDMAHIAGLVATGAHPNPLPYADVVTTTTHKTLRGPRGGMILTNDEVLAKKINSAIFPGTQGGPLEHVIAAKAVAFKEALDPEFATYIEQVIKNTQAMADEFAKVDGLRLIAGGSDNHLLNLKVLDLGINGKEAQDLLDSVHITLNKEAIPDETLSPFKTSGVRIGAAAITSRGFKEAEARKVAQLVSKALVNHDNQEKLEEVRKSALELTHQFPL.

Residues L121 and 125 to 127 (GHL) each bind (6S)-5,6,7,8-tetrahydrofolate. Position 230 is an N6-(pyridoxal phosphate)lysine (K230). 355–357 (SPF) contributes to the (6S)-5,6,7,8-tetrahydrofolate binding site.

The protein belongs to the SHMT family. Homodimer. Pyridoxal 5'-phosphate serves as cofactor.

Its subcellular location is the cytoplasm. The catalysed reaction is (6R)-5,10-methylene-5,6,7,8-tetrahydrofolate + glycine + H2O = (6S)-5,6,7,8-tetrahydrofolate + L-serine. It functions in the pathway one-carbon metabolism; tetrahydrofolate interconversion. Its pathway is amino-acid biosynthesis; glycine biosynthesis; glycine from L-serine: step 1/1. Functionally, catalyzes the reversible interconversion of serine and glycine with tetrahydrofolate (THF) serving as the one-carbon carrier. This reaction serves as the major source of one-carbon groups required for the biosynthesis of purines, thymidylate, methionine, and other important biomolecules. Also exhibits THF-independent aldolase activity toward beta-hydroxyamino acids, producing glycine and aldehydes, via a retro-aldol mechanism. The sequence is that of Serine hydroxymethyltransferase from Lactococcus lactis subsp. cremoris (strain MG1363).